Here is a 451-residue protein sequence, read N- to C-terminus: D(1A) dopamine receptor (451 aa).

Residues 1-22 (MTFNITSMDEDVLLTERESSFR) are Extracellular-facing. The N-linked (GlcNAc...) asparagine glycan is linked to N4. A helical transmembrane segment spans residues 23–48 (VLTGCFLSVLILSTLLGNTLVCAAVI). At 49–59 (RFRHLRSKVTN) the chain is on the cytoplasmic side. A helical membrane pass occupies residues 60-86 (FFVISLAVSDLLVAVLVMPWKAVAEIA). Over 87 to 95 (GFWPFGTFC) the chain is Extracellular. A disulfide bridge connects residues C95 and C185. The helical transmembrane segment at 96–118 (NIWVAFDIMCSTASILNLCVISV) threads the bilayer. The Cytoplasmic segment spans residues 119–137 (DRYWAISSPFRYERKMTPK). The chain crosses the membrane as a helical span at residues 138 to 162 (VAFIMIGVAWTLSVLISFIPVQLNW). Residues 163–191 (HKAKTTSFFDLNITLHDRTMDNCDSSLNR) are Extracellular-facing. The chain crosses the membrane as a helical span at residues 192-217 (TYAISSSLISFYIPVAIMIVTYTRIY). Residues 218-271 (RIAAKQIRRISALERAAVHAKNCQNSTSNRNSLDCQQPESSLKTSFKRETKVLK) lie on the Cytoplasmic side of the membrane. The helical transmembrane segment at 272 to 298 (TLSVIMGVFVCCWLPFFILNCIVPFCD) threads the bilayer. Over 299 to 315 (PSLTTSGTEPFCISSTT) the chain is Extracellular. Residues 316–340 (FDVFVWFGWANSSLNPIIYAFNADF) traverse the membrane as a helical segment. The Cytoplasmic portion of the chain corresponds to 341 to 451 (RKAFSNLLGC…PITQNGQPKT (111 aa)). A lipid anchor (S-palmitoyl cysteine) is attached at C350.

The protein belongs to the G-protein coupled receptor 1 family. Brain.

It is found in the cell membrane. Its subcellular location is the cell projection. It localises to the cilium membrane. In terms of biological role, dopamine receptor whose activity is mediated by G proteins which activate adenylyl cyclase. The sequence is that of D(1A) dopamine receptor (drd1) from Xenopus laevis (African clawed frog).